A 238-amino-acid chain; its full sequence is Cysteine-rich venom protein (238 aa).

A signal peptide spans 1 to 19; that stretch reads MIAFIVLLSLAAVLQQSSG. In terms of domain architecture, SCP spans 38–164; sequence VDKHNALRRS…STKYLYVCQY (127 aa). 8 cysteine pairs are disulfide-bonded: cysteine 75–cysteine 153, cysteine 92–cysteine 165, cysteine 148–cysteine 162, cysteine 184–cysteine 191, cysteine 187–cysteine 196, cysteine 200–cysteine 233, cysteine 209–cysteine 227, and cysteine 218–cysteine 231. The ShKT domain occupies 200-233; that stretch reads CKYEDAFTNCNELAKETKCKTEWIKSKCPATCFC.

Belongs to the CRISP family. In terms of tissue distribution, expressed by the venom gland.

Its subcellular location is the secreted. Blocks olfactory (CNGA2) and retinal (CNGA1) CNG channel currents. Does not affect neither depolarization- nor caffeine-induced contraction of smooth muscle. This Drysdalia coronoides (White-lipped snake) protein is Cysteine-rich venom protein.